A 151-amino-acid polypeptide reads, in one-letter code: Neuroglobin (151 aa).

One can recognise a Globin domain in the interval 1–149 (MELPEPELIR…VVQAMSRGWG (149 aa)). Heme b contacts are provided by His-64 and His-96.

Belongs to the globin family. Monomer. Homodimer and homotetramer; disulfide-linked. Mainly monomeric but also detected as part of homodimers and homotetramers. Interacts with 14-3-3 proteins; regulates the phosphorylation of NGB. Could interact (ferrous form) with G-alpha(i) proteins (GTP-bound form). Post-translationally, phosphorylated during hypoxia by ERK1/ERK2. Phosphorylation regulates the heme pocket hexacoordination preventing the association of His-64 with the heme metal center. Thereby, promotes the access of dioxygen and nitrite to the heme and stimulates the nitrite reductase activity. Phosphorylation during hypoxia is stabilized by 14-3-3 proteins.

It is found in the cytoplasm. It localises to the cytosol. The protein localises to the mitochondrion matrix. It carries out the reaction Fe(III)-heme b-[protein] + nitric oxide + H2O = Fe(II)-heme b-[protein] + nitrite + 2 H(+). Its function is as follows. Monomeric globin with a bis-histidyl six-coordinate heme-iron atom through which it can bind dioxygen, carbon monoxide and nitric oxide. Could help transport oxygen and increase its availability to the metabolically active neuronal tissues, though its low quantity in tissues as well as its high affinity for dioxygen, which may limit its oxygen-releasing ability, argue against it. The ferrous/deoxygenated form exhibits a nitrite reductase activity and it could produce nitric oxide which in turn inhibits cellular respiration in response to hypoxia. In its ferrous/deoxygenated state, it may also exhibit GDI (Guanine nucleotide Dissociation Inhibitor) activity toward heterotrimeric G-alpha proteins, thereby regulating signal transduction to facilitate neuroprotective responses in the wake of hypoxia and associated oxidative stress. The sequence is that of Neuroglobin from Bos taurus (Bovine).